A 398-amino-acid polypeptide reads, in one-letter code: tRNA-specific 2-thiouridylase MnmA (398 aa).

Residues 19–26 (AMSGGVDS) and L45 contribute to the ATP site. Residue C113 is the Nucleophile of the active site. C113 and C210 are oxidised to a cystine. G137 provides a ligand contact to ATP. The tract at residues 160–162 (RDQ) is interaction with tRNA. Catalysis depends on C210, which acts as the Cysteine persulfide intermediate.

It belongs to the MnmA/TRMU family.

The protein localises to the cytoplasm. The catalysed reaction is S-sulfanyl-L-cysteinyl-[protein] + uridine(34) in tRNA + AH2 + ATP = 2-thiouridine(34) in tRNA + L-cysteinyl-[protein] + A + AMP + diphosphate + H(+). Catalyzes the 2-thiolation of uridine at the wobble position (U34) of tRNA, leading to the formation of s(2)U34. This Rhodopseudomonas palustris (strain HaA2) protein is tRNA-specific 2-thiouridylase MnmA.